The sequence spans 496 residues: Glycerol kinase (496 aa).

Threonine 12 lines the ADP pocket. The ATP site is built by threonine 12, threonine 13, and serine 14. Threonine 12 provides a ligand contact to sn-glycerol 3-phosphate. Position 16 (arginine 16) interacts with ADP. Residues arginine 82, glutamate 83, and tyrosine 134 each coordinate sn-glycerol 3-phosphate. Arginine 82, glutamate 83, and tyrosine 134 together coordinate glycerol. Histidine 230 is modified (phosphohistidine; by HPr). Aspartate 244 provides a ligand contact to sn-glycerol 3-phosphate. 2 residues coordinate glycerol: aspartate 244 and glutamine 245. Positions 266 and 309 each coordinate ADP. ATP contacts are provided by threonine 266, glycine 309, glutamine 313, and glycine 410. 2 residues coordinate ADP: glycine 410 and asparagine 414.

Belongs to the FGGY kinase family. As to quaternary structure, homotetramer and homodimer (in equilibrium). In terms of processing, the phosphoenolpyruvate-dependent sugar phosphotransferase system (PTS), including enzyme I, and histidine-containing protein (HPr) are required for the phosphorylation, which leads to the activation of the enzyme.

It catalyses the reaction glycerol + ATP = sn-glycerol 3-phosphate + ADP + H(+). It participates in polyol metabolism; glycerol degradation via glycerol kinase pathway; sn-glycerol 3-phosphate from glycerol: step 1/1. Activated by phosphorylation and inhibited by fructose 1,6-bisphosphate (FBP). In terms of biological role, key enzyme in the regulation of glycerol uptake and metabolism. Catalyzes the phosphorylation of glycerol to yield sn-glycerol 3-phosphate. This Bacillus thuringiensis (strain Al Hakam) protein is Glycerol kinase.